Here is a 257-residue protein sequence, read N- to C-terminus: Diaminopimelate epimerase (257 aa).

Asparagine 13, glutamine 46, and asparagine 66 together coordinate substrate. The active-site Proton donor is cysteine 75. Residues 76-77 (GN), asparagine 145, asparagine 175, and 193-194 (ER) each bind substrate. Cysteine 202 acts as the Proton acceptor in catalysis. 203–204 (GS) contributes to the substrate binding site.

The protein belongs to the diaminopimelate epimerase family. Homodimer.

The protein resides in the cytoplasm. The catalysed reaction is (2S,6S)-2,6-diaminopimelate = meso-2,6-diaminopimelate. It functions in the pathway amino-acid biosynthesis; L-lysine biosynthesis via DAP pathway; DL-2,6-diaminopimelate from LL-2,6-diaminopimelate: step 1/1. In terms of biological role, catalyzes the stereoinversion of LL-2,6-diaminopimelate (L,L-DAP) to meso-diaminopimelate (meso-DAP), a precursor of L-lysine and an essential component of the bacterial peptidoglycan. This Gluconobacter oxydans (strain 621H) (Gluconobacter suboxydans) protein is Diaminopimelate epimerase.